The chain runs to 390 residues: Pre-mycofactocin synthase (390 aa).

In terms of domain architecture, FMN hydroxy acid dehydrogenase spans 1–383; that stretch reads MADEWFETVA…RSDDILIPAD (383 aa). Residues S108, Q128, T156, and K254 each contribute to the FMN site. H278 serves as the catalytic Proton acceptor. FMN contacts are provided by residues 309–313 and 332–333; these read DGGIR and GR.

Belongs to the FMN-dependent alpha-hydroxy acid dehydrogenase family. The cofactor is FMN.

It carries out the reaction 3-amino-5-[(4-hydroxyphenyl)methyl]-4,4-dimethyl-2-pyrrolidin-2-one + O2 + H2O = pre-mycofactocin + H2O2 + NH4(+). Involved in the biosynthesis of the enzyme cofactor mycofactocin (MFT). Catalyzes the oxidative deamination of AHDP (3-amino-5-[(4-hydroxyphenyl)methyl]-4,4-dimethyl-2-pyrrolidin-2-one), forming an alpha-keto amide moiety on the resulting molecule, which is called pre-mycofactocin (PMFT). This reaction occurs via a 5-[(4-hydroxyphenyl)methyl]-3-imino-4,4-dimethylpyrrolidin-2-one intermediate, which converts to PMFT. The alpha-keto amide moiety is the redox-active center for the redox activity of mycofactocin. The sequence is that of Pre-mycofactocin synthase from Mycobacterium ulcerans (strain Agy99).